Consider the following 491-residue polypeptide: Probable allantoate deiminase (491 aa).

Positions 1–32 (MALLLSYPRRHPSIHLLILSAYALFLLPILDG) are cleaved as a signal peptide. N109 is a glycosylation site (N-linked (GlcNAc...) asparagine). Residues H120, D131, E168, and H234 each contribute to the Mn(2+) site. N-linked (GlcNAc...) asparagine glycans are attached at residues N265 and N343. H454 lines the Mn(2+) pocket.

It belongs to the peptidase M20A family. In terms of assembly, homodimer. Mn(2+) serves as cofactor.

Its subcellular location is the endoplasmic reticulum. It carries out the reaction allantoate + H2O + 2 H(+) = (S)-2-ureidoglycine + NH4(+) + CO2. Involved in the catabolism of purine nucleotides. The sequential activity of AAH, UGLYAH and UAH allows a complete purine breakdown without the intermediate generation of urea. In Oryza sativa subsp. japonica (Rice), this protein is Probable allantoate deiminase.